The sequence spans 258 residues: Acetylglutamate kinase (258 aa).

Substrate contacts are provided by residues 44–45 (GG), Arg-66, and Asn-158. ATP contacts are provided by residues 181–186 (DVSGIL) and 209–211 (IIT).

This sequence belongs to the acetylglutamate kinase family. ArgB subfamily. In terms of assembly, homodimer.

It is found in the cytoplasm. The enzyme catalyses N-acetyl-L-glutamate + ATP = N-acetyl-L-glutamyl 5-phosphate + ADP. The protein operates within amino-acid biosynthesis; L-arginine biosynthesis; N(2)-acetyl-L-ornithine from L-glutamate: step 2/4. Catalyzes the ATP-dependent phosphorylation of N-acetyl-L-glutamate. The protein is Acetylglutamate kinase of Shigella sonnei (strain Ss046).